Reading from the N-terminus, the 392-residue chain is Tryptophan synthase beta chain (392 aa).

K84 carries the N6-(pyridoxal phosphate)lysine modification.

Belongs to the TrpB family. Tetramer of two alpha and two beta chains. Requires pyridoxal 5'-phosphate as cofactor.

It carries out the reaction (1S,2R)-1-C-(indol-3-yl)glycerol 3-phosphate + L-serine = D-glyceraldehyde 3-phosphate + L-tryptophan + H2O. Its pathway is amino-acid biosynthesis; L-tryptophan biosynthesis; L-tryptophan from chorismate: step 5/5. The beta subunit is responsible for the synthesis of L-tryptophan from indole and L-serine. The sequence is that of Tryptophan synthase beta chain from Campylobacter jejuni subsp. doylei (strain ATCC BAA-1458 / RM4099 / 269.97).